The sequence spans 194 residues: Calcium channel flower (194 aa).

Topologically, residues 1-34 are cytoplasmic; that stretch reads MSFAEKITGLLARPNQQDPIGPEQPWYLKYGSRL. The helical transmembrane segment at 35–55 threads the bilayer; sequence LGIVAAFFAILFGLWNVFSII. Residues 56–65 are Extracellular-facing; it reads TLSVSCLVAG. A helical membrane pass occupies residues 66–88; that stretch reads ILQMVAGFVVMLLEAPCCFVCFG. Over 89 to 106 the chain is Cytoplasmic; it reads QVNEIAEKVESKPLYFRA. Residues 107 to 127 traverse the membrane as a helical segment; it reads GLYIAMAIPPIILCFGLASLF. At 128-194 the chain is on the extracellular side; the sequence is GSGLIFGTGV…TGAVGTDSNV (67 aa). Important for promoting apoptosis regions lie at residues 135 to 157 and 135 to 192; these read TGVV…RAAA and TGVV…GTDS.

It belongs to the calcium channel flower family. In terms of assembly, associates with the dally/ magu complex. Homomultimer. Associates with the dally/ magu complex. In terms of tissue distribution, detected in the imaginal wing disk (at protein level). As to expression, detected throughout the adult brain, including the optic lobe but, at much lower levels of expression than isoform Lose-A. Detected in the optic lobe (at protein level). Detected throughout the adult brain, including the optic lobe. Expressed in damaged and undamaged optic lobe neurons. In terms of tissue distribution, expressed in optic lobe neurons, with higher levels of expression in suboptimal neurons. Specifically expressed in injury-damaged optic lobe neurons.

The protein resides in the cell membrane. The protein localises to the cytoplasmic vesicle. It localises to the secretory vesicle. Its subcellular location is the synaptic vesicle membrane. It is found in the presynaptic cell membrane. The protein resides in the endosome. The protein localises to the synaptic vesicle. With respect to regulation, channel activity is inhibited by La(3+), which reduces Ca(2+) influx and thus inhibits it's function in promoting activity-dependent bulk endocytosis (ADBE) in response to high stimuli. Its function is as follows. Transmembrane protein which mediates synaptic endocytosis, fitness-based cell culling, neuronal culling, morphogen gradient scaling, and calcium transport. Regulates synaptic endocytosis and hence couples exo- with endocytosis. Controls two major modes of synaptic vesicle (SV) endocytosis in the synaptic boutons of neuromuscular junctions (NMJs); Ca(2+) channel-independent Clathrin-mediated endocytosis (CME) in response to mild stimulation, and Ca(2+) channel-dependent activity-dependent bulk endocytosis (ADBE) in response to strong stimulation. Functions in ADBE and subsequent SV reformation from bulk endosomes by initiating Ca(2+) channel-dependent phosphatidylinositol 4,5-bisphosphate (PtdIns(4,5)P2) compartmentalization in synaptic boutons. There it acts at the periactive zone to provide the low Ca(2+) levels required to initiate Calcineurin activation and upregulate PtdIns(4,5)P2. Conversely PtdIns(4,5)P2 enhances fwe Ca(2+) channel-activity, establishing a positive feedback loop that induces PtdIns(4,5)P2 microdomain at the periactive zone. These microdomains trigger bulk membrane invagination (i.e. ADBE) by triggering actin polymerization while also promoting localization of fwe to bulk endosomes, thereby removing the ADBE trigger to reduce endocytosis and prevent excess membrane uptake. PtdIns(4,5)P2 then promotes SV reformation from the bulk endosomes, to coordinate ADBE and subsequent SV reformation. Different combinations of the flower isoforms at the cell membrane are also required for the identification and elimination of suboptimal or supernumerary cells during development, regeneration, and adulthood. Required for the recognition and elimination of unfit cells in the developing wing during cell competition. Also required for efficient identification and elimination of injured, damaged and/or dysfunctional neurons during regeneration of the adult brain. In the developing pupal retina, mediates the elimination of unwanted postmitotic neurons, including supernumerary photoreceptor neurons that form at the periphery of the retina and are contained within incomplete ommatidia units. Downstream of the flower fitness fingerprints, cells identified as unwanted or unfit are eliminated via apoptosis through the expression of ahuizotl (azot). However, the cells marked for elimination by the flower isoforms only undergo apoptosis if additional thresholds are met; (1) their neighboring fit/healthy cells express different levels of the fwe isoforms, and (2) the levels of the protective signal SPARC expressed by the loser or unwanted cells are unable to inhibit caspase activation. These additional thresholds for flower-mediated apoptosis, allows useful cells to recover from transient and limited stress before they are unnecessarily eliminated. Functions with dally and magu in a mechanism of scaling, which utilises apoptosis to ensure that the dpp morphogen gradient, which mediates organ growth, remains proportional to the size of the growing wing. In this mechanism, fwe represses dally- and Magu-dependent activity in expanding the gradient, and dally/Magu inhibits fwe-dependent apoptosis to keep cell death rate low. When the levels of these different proteins are optimally regulated the gradient correctly scales with organ growth but when this fails, fwe-mediated apoptosis is activated to trim the developing tissue to match the correct size of the gradient. In terms of biological role, functions with the other flower isoforms to produce tissue-specific fitness fingerprints that identify unfit or fit cells during cell selection processes in order to maintain tissue health. In the wing imaginal disk, this isoform is highly expressed in healthy/normal cells but is down-regulated in cells with decreased fitness. During cell competition, if levels of this isoform in unfit cells is lower than in the surrounding neighboring cells, the suboptimal cells are recognized as 'loser' cells, and undergo elimination via apoptosis to be replaced by the surrounding healthy 'winner' cell population. Functionally, functions with the other flower isoforms to produce tissue-specific fitness fingerprints that identify unfit or fit cells during cell selection processes in order to maintain tissue health. In the wing imaginal disk, this isoform displays low levels of expression in healthy/normal cells but is up-regulated in cells with decreased fitness. During cell competition, if levels of this isoform in unfit cells is higher than in the surrounding neighboring cells, the suboptimal cells are recognized as 'loser' cells, and undergo elimination via apoptosis to be replaced by the surrounding healthy 'winner' cell population. Functions with the other flower isoforms to produce tissue-specific fitness fingerprints that identify unfit cells for cell selection processes during development, regeneration, and to maintain tissue health. During cell competition in certain tissues, marks suboptimal or damaged cells as 'loser' cells. In cells of the wing imaginal disk and damaged or dysfunctional neurons in the adult optic lobe, this isoform displays low to no expression in healthy/normal cells but is up-regulated in cells with decreased fitness or damage-affected neurons. During cell competition, if levels of this isoform in unfit cells is higher than in the surrounding neighboring cells, the suboptimal cells are recognized as 'loser' cells, and undergo elimination via apoptosis to be replaced by the surrounding healthy/undamaged 'winner' cell population. In the developing pupal retina, also required for the recognition and elimination of postmitotic neurons, including supernumerary photoreceptor neurons that form at the periphery of the retina and are contained within incomplete ommatidia units. Activity at the peripheral retina is induced by the wg signaling pathway but, once activated, it promotes apoptosis of supernumerary photoreceptor neurons independently of wg signaling and snail function. This Drosophila melanogaster (Fruit fly) protein is Calcium channel flower (fwe).